A 67-amino-acid chain; its full sequence is Sec-independent protein translocase protein TatA (67 aa).

A helical transmembrane segment spans residues 1 to 21; that stretch reads MFGLGGQELVLILLIVLLLFG.

Belongs to the TatA/E family. Forms a complex with TatC.

The protein resides in the cell inner membrane. Functionally, part of the twin-arginine translocation (Tat) system that transports large folded proteins containing a characteristic twin-arginine motif in their signal peptide across membranes. TatA could form the protein-conducting channel of the Tat system. The polypeptide is Sec-independent protein translocase protein TatA (Chlorobaculum tepidum (strain ATCC 49652 / DSM 12025 / NBRC 103806 / TLS) (Chlorobium tepidum)).